Consider the following 92-residue polypeptide: Long neurotoxin 469 (92 aa).

A signal peptide spans 1–21; that stretch reads MKTLLLTLVVVTIVCLDLGDS. 5 cysteine pairs are disulfide-bonded: Cys-24/Cys-41, Cys-34/Cys-62, Cys-47/Cys-51, Cys-66/Cys-77, and Cys-78/Cys-83.

It belongs to the three-finger toxin family. Long-chain subfamily. Type II alpha-neurotoxin sub-subfamily. In terms of tissue distribution, expressed by the venom gland.

It is found in the secreted. Binds with high affinity to muscular (alpha-1/CHRNA1) and neuronal (alpha-7/CHRNA7) nicotinic acetylcholine receptor (nAChR) and inhibits acetylcholine from binding to the receptor, thereby impairing neuromuscular and neuronal transmission. The protein is Long neurotoxin 469 of Drysdalia coronoides (White-lipped snake).